Reading from the N-terminus, the 783-residue chain is ATP-dependent 6-phosphofructokinase (783 aa).

Residues 1 to 10 (MAPPQAPVQP) show a composition bias toward pro residues. Residues 1 to 20 (MAPPQAPVQPPKRRRIGVLT) are disordered. An N-terminal catalytic PFK domain 1 region spans residues 1 to 389 (MAPPQAPVQP…YHFSYINTST (389 aa)). Residues G23, 86–87 (RC), and 116–119 (GDGS) each bind ATP. Residue D117 participates in Mg(2+) binding. Substrate is bound by residues 162 to 164 (SID), R199, 206 to 208 (MGR), E263, R291, and 297 to 300 (HTQR). D164 functions as the Proton acceptor in the catalytic mechanism. Positions 390–403 (PDHPKLLLPENKRM) are interdomain linker. A C-terminal regulatory PFK domain 2 region spans residues 404 to 783 (RIGIIHVGAP…NATWSCYENA (380 aa)). Beta-D-fructose 2,6-bisphosphate is bound by residues R480, 537–541 (TISNN), R575, 582–584 (QGG), E642, R668, 674–677 (HFQQ), and R749.

It belongs to the phosphofructokinase type A (PFKA) family. ATP-dependent PFK group I subfamily. Eukaryotic two domain clade 'E' sub-subfamily. Homotetramer. It depends on Mg(2+) as a cofactor.

The protein localises to the cytoplasm. The catalysed reaction is beta-D-fructose 6-phosphate + ATP = beta-D-fructose 1,6-bisphosphate + ADP + H(+). Its pathway is carbohydrate degradation; glycolysis; D-glyceraldehyde 3-phosphate and glycerone phosphate from D-glucose: step 3/4. Its activity is regulated as follows. Allosterically activated by ADP, AMP, or fructose 2,6-bisphosphate, and allosterically inhibited by ATP or citrate. Its function is as follows. Catalyzes the phosphorylation of D-fructose 6-phosphate to fructose 1,6-bisphosphate by ATP, the first committing step of glycolysis. This chain is ATP-dependent 6-phosphofructokinase (pfkA), found in Aspergillus niger.